The following is a 127-amino-acid chain: Protein ApaG (127 aa).

One can recognise an ApaG domain in the interval 3–127; sequence DTNKYRIEVQ…FVLASPRALH (125 aa).

This Dechloromonas aromatica (strain RCB) protein is Protein ApaG.